We begin with the raw amino-acid sequence, 145 residues long: Ribonuclease VapC24 (145 aa).

Positions 4-123 (IDTNILLYAQ…RHHGVDEFAT (120 aa)) constitute a PINc domain. The Mg(2+) site is built by Asp5 and Asp106.

It belongs to the PINc/VapC protein family. Requires Mg(2+) as cofactor.

Functionally, toxic component of a type II toxin-antitoxin (TA) system. An RNase. Its cognate antitoxin is VapB24. This chain is Ribonuclease VapC24, found in Mycobacterium tuberculosis (strain CDC 1551 / Oshkosh).